Consider the following 910-residue polypeptide: Translation factor GUF1 homolog, mitochondrial (910 aa).

The interval 126 to 188 (RRGNGLPFER…DGGGAPEHPQ (63 aa)) is disordered. The 178-residue stretch at 189–366 (QNVRNFCILA…RIVSDIPCPA (178 aa)) folds into the tr-type G domain. GTP is bound by residues 198 to 205 (AHIDSGKS), 259 to 263 (DTPGH), and 313 to 316 (NKID). The segment at 639-683 (GSGDGRADGSADGSADGSADGSGDSSAHGSSDRRGAGCARGSDDI) is disordered. Residues 646–667 (DGSADGSADGSADGSGDSSAHG) show a composition bias toward low complexity.

This sequence belongs to the TRAFAC class translation factor GTPase superfamily. Classic translation factor GTPase family. LepA subfamily.

It is found in the mitochondrion inner membrane. It catalyses the reaction GTP + H2O = GDP + phosphate + H(+). Promotes mitochondrial protein synthesis. May act as a fidelity factor of the translation reaction, by catalyzing a one-codon backward translocation of tRNAs on improperly translocated ribosomes. Binds to mitochondrial ribosomes in a GTP-dependent manner. This Plasmodium vivax (strain Salvador I) protein is Translation factor GUF1 homolog, mitochondrial.